We begin with the raw amino-acid sequence, 387 residues long: Sharpin (387 aa).

Residues 1–180 are self-association; sequence MAPPAGGAAA…EREELAGSLA (180 aa). The span at 122-132 shows a compositional bias: polar residues; sequence EGQNGSKSNSP. The tract at residues 122–169 is disordered; the sequence is EGQNGSKSNSPPALGPEACPVSLPSPPEASTLKGPPPEADLPRSPGNL. Phosphoserine is present on Ser-165. Positions 175–310 are interaction with SHANK1; sequence LAGSLARAIA…SAPREAPATG (136 aa). The Ubiquitin-like domain maps to 219–288; it reads IRLQVTLEDA…PERSLASYGV (70 aa). Residues 305-349 form a disordered region; the sequence is EAPATGPSPQHPQKMDGELGRLFPPSLGLPPGPQPAASSLPSPLQ. Ser-312 carries the phosphoserine modification. Residues 339 to 349 show a composition bias toward low complexity; it reads PAASSLPSPLQ. The RanBP2-type zinc-finger motif lies at 348-377; the sequence is LQPSWSCPSCTFINAPDRPGCEMCSTQRPC.

Monomer and homodimer. Component of the LUBAC complex (linear ubiquitin chain assembly complex) which consists of SHARPIN, RBCK1 and RNF31. LUBAC has a MW of approximately 600 kDa suggesting a heteromultimeric assembly of its subunits. Associates with the TNF-R1 signaling complex (TNF-RSC) in a stimulation-dependent manner. Interacts with EYA1, EYA2, SHANK1 and SHANK3 (via ANK repeats). As to expression, highly expressed in skeletal muscle and placenta and at lower levels in brain, heart, colon without mucosa, thymus, spleen, kidney, liver, small intestine, lung and peripheral blood leukocytes. Up-regulated in various tumor tissues such as kidney, liver, ovary and pancreas tumors.

It localises to the cytoplasm. The protein localises to the cytosol. The protein resides in the synapse. It functions in the pathway protein modification; protein ubiquitination. Component of the LUBAC complex which conjugates linear polyubiquitin chains in a head-to-tail manner to substrates and plays a key role in NF-kappa-B activation and regulation of inflammation. LUBAC conjugates linear polyubiquitin to IKBKG and RIPK1 and is involved in activation of the canonical NF-kappa-B and the JNK signaling pathways. Linear ubiquitination mediated by the LUBAC complex interferes with TNF-induced cell death and thereby prevents inflammation. LUBAC is recruited to the TNF-R1 signaling complex (TNF-RSC) following polyubiquitination of TNF-RSC components by BIRC2 and/or BIRC3 and to conjugate linear polyubiquitin to IKBKG and possibly other components contributing to the stability of the complex. The LUBAC complex is also involved in innate immunity by conjugating linear polyubiquitin chains at the surface of bacteria invading the cytosol to form the ubiquitin coat surrounding bacteria. LUBAC is not able to initiate formation of the bacterial ubiquitin coat, and can only promote formation of linear polyubiquitins on pre-existing ubiquitin. The bacterial ubiquitin coat acts as an 'eat-me' signal for xenophagy and promotes NF-kappa-B activation. Together with OTULIN, the LUBAC complex regulates the canonical Wnt signaling during angiogenesis. The protein is Sharpin of Homo sapiens (Human).